A 363-amino-acid chain; its full sequence is NAD kinase 1 (363 aa).

Catalysis depends on Asp68, which acts as the Proton acceptor. NAD(+)-binding positions include 68–69, Arg73, 175–176, Arg186, Asp205, Ala240, and Gln275; these read DG and ND.

This sequence belongs to the NAD kinase family. It depends on a divalent metal cation as a cofactor.

It localises to the cytoplasm. It catalyses the reaction NAD(+) + ATP = ADP + NADP(+) + H(+). Its function is as follows. Involved in the regulation of the intracellular balance of NAD and NADP, and is a key enzyme in the biosynthesis of NADP. Catalyzes specifically the phosphorylation on 2'-hydroxyl of the adenosine moiety of NAD to yield NADP. This Streptomyces coelicolor (strain ATCC BAA-471 / A3(2) / M145) protein is NAD kinase 1.